Consider the following 445-residue polypeptide: UPF0210 protein SP_0239 (445 aa).

This sequence belongs to the UPF0210 family. Homodimer.

This is UPF0210 protein SP_0239 from Streptococcus pneumoniae serotype 4 (strain ATCC BAA-334 / TIGR4).